The chain runs to 1128 residues: Major DNA-binding protein (1128 aa).

Residues 1104-1128 (LGGGGQGSGGRRKRRLATVLPGLEV) form a required for nuclear localization region.

It belongs to the herpesviridae major DNA-binding protein family. Homooligomers. Forms double-helical filaments necessary for the formation of replication compartments within the host nucleus. Interacts with the origin-binding protein. Interacts with the helicase primase complex; this interaction stimulates primer synthesis activity of the helicase-primase complex. Interacts with the DNA polymerase. Interacts with the alkaline exonuclease; this interaction increases its nuclease processivity.

It localises to the virion tegument. Its subcellular location is the host nucleus. Functionally, plays several crucial roles in viral infection. Participates in the opening of the viral DNA origin to initiate replication by interacting with the origin-binding protein. May disrupt loops, hairpins and other secondary structures present on ssDNA to reduce and eliminate pausing of viral DNA polymerase at specific sites during elongation. Promotes viral DNA recombination by performing strand-transfer, characterized by the ability to transfer a DNA strand from a linear duplex to a complementary single-stranded DNA circle. Can also catalyze the renaturation of complementary single strands. Additionally, reorganizes the host cell nucleus, leading to the formation of prereplicative sites and replication compartments. This process is driven by the protein which can form double-helical filaments in the absence of DNA. This is Major DNA-binding protein from Homo sapiens (Human).